Reading from the N-terminus, the 86-residue chain is Small ribosomal subunit protein bS18 (86 aa).

It belongs to the bacterial ribosomal protein bS18 family. As to quaternary structure, part of the 30S ribosomal subunit. Forms a tight heterodimer with protein bS6.

Functionally, binds as a heterodimer with protein bS6 to the central domain of the 16S rRNA, where it helps stabilize the platform of the 30S subunit. This is Small ribosomal subunit protein bS18 from Maridesulfovibrio salexigens (strain ATCC 14822 / DSM 2638 / NCIMB 8403 / VKM B-1763) (Desulfovibrio salexigens).